The chain runs to 93 residues: Red pigment-concentrating hormone (93 aa).

The signal sequence occupies residues 1 to 21; the sequence is MVRAVVATLLVVLVVASCVSA. Glutamine 22 is modified (pyrrolidone carboxylic acid). The residue at position 29 (tryptophan 29) is a Tryptophan amide. The propeptide occupies 33-93; the sequence is AAAGGEGTGM…VQCQDEEYLG (61 aa). The disordered stretch occupies residues 34-56; it reads AAGGEGTGMHPPAGAVVPPPSSL.

This sequence belongs to the AKH/HRTH/RPCH family. Strongly expressed in the eyestalk and weakly in brain. Not expressed in other tissues tested.

It is found in the secreted. In terms of biological role, this hormone adapts the animal to light backgrounds by stimulating concentration of the pigment of its red body-chromatophores. The protein is Red pigment-concentrating hormone of Penaeus monodon (Giant tiger prawn).